An 82-amino-acid chain; its full sequence is MTDLFANPDKTLDALGLRCPEPVMMVRKTVRHMVAGETLLIIADDPATTRDIPGFCRFMEHTLLAQEIEQTPYRYLLRKGGA.

The Cysteine persulfide intermediate role is filled by cysteine 19.

The protein belongs to the sulfur carrier protein TusA family. In terms of assembly, interacts with IscS.

The protein resides in the cytoplasm. The protein operates within tRNA modification. Its function is as follows. Sulfur carrier protein involved in sulfur trafficking in the cell. Part of a sulfur-relay system required for 2-thiolation during synthesis of 2-thiouridine of the modified wobble base 5-methylaminomethyl-2-thiouridine (mnm(5)s(2)U) in tRNA. Interacts with IscS and stimulates its cysteine desulfurase activity. Accepts an activated sulfur from IscS, which is then transferred to TusD, and thus determines the direction of sulfur flow from IscS to 2-thiouridine formation. Also appears to be involved in sulfur transfer for the biosynthesis of molybdopterin. The protein is Sulfur carrier protein TusA of Edwardsiella ictaluri (strain 93-146).